Reading from the N-terminus, the 97-residue chain is Co-chaperonin GroES (97 aa).

It belongs to the GroES chaperonin family. As to quaternary structure, heptamer of 7 subunits arranged in a ring. Interacts with the chaperonin GroEL.

It is found in the cytoplasm. Functionally, together with the chaperonin GroEL, plays an essential role in assisting protein folding. The GroEL-GroES system forms a nano-cage that allows encapsulation of the non-native substrate proteins and provides a physical environment optimized to promote and accelerate protein folding. GroES binds to the apical surface of the GroEL ring, thereby capping the opening of the GroEL channel. This Arthrobacter sp. (strain FB24) protein is Co-chaperonin GroES.